The chain runs to 315 residues: THO complex subunit 3 (315 aa).

6 WD repeats span residues 18–57 (GHKKKVHSVAWNSNGTKLASGSVDQTARIWNIEPHGHSKA), 64–104 (GHTD…CTQQ), 106–145 (ELSGENINITYKPDGTHVAVGNRDDELTILDVRKFKPLHR), 189–228 (AHTAGCYCIAIDPKGRYFAVGSADSLVSLWDISDMLCLRT), 231–270 (KLEWPVRTISFNYSGEYIASASEDLFIDIANVQTGRTVHQ), and 272–311 (PCRAAMNSVEWNPKYNLLAYAGDDKNPKYNTDEGVFRIFG).

It belongs to the THOC3 family. In terms of assembly, component of the THO complex, which is composed of THO1, THO2, THO3, THO5, THO6 and THO7.

It localises to the nucleus. Acts as a component of the THO subcomplex of the TREX complex which is thought to couple mRNA transcription, processing and nuclear export. Contributes to the integrity of the endogenous trans-acting small interfering RNA (ta-siRNA) pathway. May process or transport a long RNA molecule so that it can be a template for secondary siRNA production. May participate in the trafficking of siRNA precursors to the ARGONAUTE catalytic center. Required for the generation of functional messenger ribonucleoproteins (mRNPs). The polypeptide is THO complex subunit 3 (THO3) (Arabidopsis thaliana (Mouse-ear cress)).